We begin with the raw amino-acid sequence, 593 residues long: Autophagy-related protein 22-2 (593 aa).

The chain crosses the membrane as a helical span at residues 42-62 (YGVAAEVFAVCGVGSFLPLTL). The N-linked (GlcNAc...) asparagine glycan is linked to Asn-90. 3 helical membrane passes run 112–132 (SFAMYTFSLAVLIQALTLVSF), 159–179 (LFMLIVPPVFVLGALLVVIGV), and 181–201 (CLGSSFVVLNSFLPILVANDP). The interval 228–261 (SWTDEEDTGDHAGPAGSKKAVEPEKASSSTSPEL) is disordered. A run of 4 helical transmembrane segments spans residues 271 to 291 (GVGLGYCAAVLVQILSILLLF), 305 to 325 (LPLRFVLLLVGIWWAAFTVVC), 377 to 397 (VVVFLAAWFLISDAIATVSGT), and 415 to 435 (LLSITATMSGMAGAFLWPIVA). N-linked (GlcNAc...) asparagine glycosylation occurs at Asn-443. The next 4 helical transmembrane spans lie at 448-468 (LCIALFEIIPLYGMLAYIPFI), 480-500 (WEIFPLGIVHGVVSGGLASYC), 525-545 (KGSSFVGPAIVGALIDATGSV), and 548-568 (GFIFIGVLILLPMPLVWLVNA).

It belongs to the ATG22 family.

The protein resides in the vacuole membrane. Functionally, vacuolar effluxer which mediate the efflux of amino acids resulting from autophagic degradation. The release of autophagic amino acids allows the maintenance of protein synthesis and viability during nitrogen starvation. The sequence is that of Autophagy-related protein 22-2 (atg22-2) from Emericella nidulans (strain FGSC A4 / ATCC 38163 / CBS 112.46 / NRRL 194 / M139) (Aspergillus nidulans).